We begin with the raw amino-acid sequence, 106 residues long: Ribosomal processing cysteine protease Prp (106 aa).

The active-site Proton donor is H22. C34 functions as the Nucleophile in the catalytic mechanism.

It belongs to the Prp family. Homodimer. A mutant protein unable to cleave bL27 copurifies with its substrate.

With respect to regulation, not inhibited by short peptide analogs; a 6-mer inhibits only 20% while a 13-mer inhibits 63%. Inhibited by Ac-KLNLQFF-CH(2) which binds covalantly to Cys-34. Inhibited by mersalyl acid (C13H18HgNO6). Functionally, an essential cysteine protease that cleaves the N-terminal 9 amino acids from ribosomal protein bL27. Also acts as an N-terminal protease on the major capsid and scaffold assembly proteins of bacteriophage 80alpha. Cleavage of the N-terminus of bL27 (and thus this enzyme) is essential for growth; it cannot be replaced by a 'pre-cleaved' or non-cleavable form of bL27. Might serve a chaperone function during ribosome assembly. This Staphylococcus aureus (strain NCTC 8325 / PS 47) protein is Ribosomal processing cysteine protease Prp.